Consider the following 639-residue polypeptide: Kininogen-1 (639 aa).

An N-terminal signal peptide occupies residues Met1–Ala18. Residues Cys28–Lys132 form the Cystatin kininogen-type 1 domain. 9 disulfides stabilise this stretch: Cys28/Cys609, Cys83/Cys94, Cys107/Cys126, Cys142/Cys145, Cys206/Cys218, Cys229/Cys248, Cys264/Cys267, Cys328/Cys340, and Cys351/Cys370. Asn82 is a glycosylation site (N-linked (GlcNAc...) asparagine). The Cystatin kininogen-type 2 domain maps to Val151 to Asp254. Residues Asn169 and Asn205 are each glycosylated (N-linked (GlcNAc...) asparagine). The 104-residue stretch at Val273–Thr376 folds into the Cystatin kininogen-type 3 domain. An N-linked (GlcNAc...) asparagine glycan is attached at Asn294. At Ser332 the chain carries Phosphoserine. Disordered regions lie at residues Asn438–His462 and Gly476–Pro547. A compositionally biased stretch (basic residues) spans Pro482–Asp502. Residues Lys503–Arg519 show a composition bias toward basic and acidic residues. Residues Leu522 to Gly537 are compositionally biased toward polar residues. Residue Asn529 is glycosylated (N-linked (GlcNAc...) asparagine).

In terms of processing, bradykinin is released from kininogen by plasma kallikrein. Phosphorylated by FAM20C in the extracellular medium. Post-translationally, bradykinin is inactivated by ACE, which removes the dipeptide Arg-Phe from its C-terminus. In terms of tissue distribution, plasma.

It localises to the secreted. It is found in the extracellular space. Its function is as follows. Kininogens are inhibitors of thiol proteases. HMW-kininogen plays an important role in blood coagulation by helping to position optimally prekallikrein and factor XI next to factor XII; HMW-kininogen inhibits the thrombin- and plasmin-induced aggregation of thrombocytes. LMW-kininogen inhibits the aggregation of thrombocytes. LMW-kininogen is in contrast to HMW-kininogen not involved in blood clotting. The active peptide bradykinin is a potent vasodilatator that is released from HMW-kininogen shows a variety of physiological effects: (A) influence in smooth muscle contraction, (B) induction of hypotension, (C) natriuresis and diuresis, (D) decrease in blood glucose level, (E) it is a mediator of inflammation and causes (E1) increase in vascular permeability, (E2) stimulation of nociceptors (4E3) release of other mediators of inflammation (e.g. prostaglandins), (F) it has a cardioprotective effect (directly via bradykinin action, indirectly via endothelium-derived relaxing factor action). This is Kininogen-1 (Kng1) from Rattus norvegicus (Rat).